The chain runs to 179 residues: Putative invertase inhibitor (179 aa).

The signal sequence occupies residues 1 to 23 (MKLSFSLCIFFFNLLLLLQAVIS). 2 cysteine pairs are disulfide-bonded: Cys-31–Cys-46 and Cys-102–Cys-142.

Belongs to the PMEI family. In terms of assembly, monomer. Not glycosylated. Expressed in pollen (at protein level). Expressed in stem, but not leaves (at protein level). Expressed in pollen.

Its subcellular location is the secreted. The protein localises to the cell wall. It localises to the endoplasmic reticulum. Its function is as follows. Invertase inhibitor. In Platanus acerifolia (London plane tree), this protein is Putative invertase inhibitor.